A 249-amino-acid chain; its full sequence is MLKGAWQARIVTLFPEAFPGTLGLSLTGKALEMGLWSLETIDLRPFGEGRHRNVDDNPAGGGAGMVLRADIVARALDAASVGTPPERSRWPVVYLSPRGKPFSQAMARDWAGAEGLTLLCGRFEGVDQRVLDAYAVEEVSLGDFVLTGGEIAAQALIDATVRLIPRVLGNHASTEEESFSEGLLEFPQYTRPTVWQDRTIPEVLLSGHHANIARWRRAEAERLTKERRPDLWRAYCAARGRDPDEDREL.

S-adenosyl-L-methionine is bound by residues G121 and 141–146; that span reads LGDFVL.

Belongs to the RNA methyltransferase TrmD family. In terms of assembly, homodimer.

The protein resides in the cytoplasm. It carries out the reaction guanosine(37) in tRNA + S-adenosyl-L-methionine = N(1)-methylguanosine(37) in tRNA + S-adenosyl-L-homocysteine + H(+). Its function is as follows. Specifically methylates guanosine-37 in various tRNAs. The sequence is that of tRNA (guanine-N(1)-)-methyltransferase from Cereibacter sphaeroides (strain ATCC 17023 / DSM 158 / JCM 6121 / CCUG 31486 / LMG 2827 / NBRC 12203 / NCIMB 8253 / ATH 2.4.1.) (Rhodobacter sphaeroides).